A 240-amino-acid polypeptide reads, in one-letter code: Aldehyde dehydrogenase, cytosolic 2 (240 aa).

Active-site residues include Glu8 and Cys42. An N6-acetyllysine mark is found at Lys106, Lys149, Lys151, and Lys174.

Belongs to the aldehyde dehydrogenase family. As to quaternary structure, homotetramer. Non-lens specific, predominant form expressed in the liver.

Its subcellular location is the cytoplasm. The enzyme catalyses an aldehyde + NAD(+) + H2O = a carboxylate + NADH + 2 H(+). Its pathway is alcohol metabolism; ethanol degradation; acetate from ethanol: step 2/2. Elephant shrews, in contrast to other mammals, possess both a lens- and a non-lens specific class-1 aldehyde dehydrogenase. Can convert/oxidize retinaldehyde to retinoic acid. The polypeptide is Aldehyde dehydrogenase, cytosolic 2 (Macroscelides proboscideus (Short-eared elephant shrew)).